Reading from the N-terminus, the 229-residue chain is Flagellar L-ring protein (229 aa).

An N-terminal signal peptide occupies residues 1-23 (MNPLTRVALAVAAFAALVLALSA). Cysteine 24 carries N-palmitoyl cysteine lipidation. A lipid anchor (S-diacylglycerol cysteine) is attached at cysteine 24.

It belongs to the FlgH family. The basal body constitutes a major portion of the flagellar organelle and consists of four rings (L,P,S, and M) mounted on a central rod.

It localises to the cell outer membrane. Its subcellular location is the bacterial flagellum basal body. Its function is as follows. Assembles around the rod to form the L-ring and probably protects the motor/basal body from shearing forces during rotation. The polypeptide is Flagellar L-ring protein (Anaeromyxobacter dehalogenans (strain 2CP-1 / ATCC BAA-258)).